The sequence spans 391 residues: S-adenosylmethionine synthase (391 aa).

His-14 contributes to the ATP binding site. Asp-16 provides a ligand contact to Mg(2+). Residue Glu-42 coordinates K(+). Residues Glu-55 and Gln-98 each contribute to the L-methionine site. A flexible loop region spans residues 98-108 (QSADIAMGVDE). ATP contacts are provided by residues 172–174 (DGK), 238–239 (RF), Asp-247, 253–254 (RK), Ala-270, and Lys-274. Asp-247 is a binding site for L-methionine. An L-methionine-binding site is contributed by Lys-278.

This sequence belongs to the AdoMet synthase family. Homotetramer; dimer of dimers. It depends on Mg(2+) as a cofactor. K(+) serves as cofactor.

The protein localises to the cytoplasm. It catalyses the reaction L-methionine + ATP + H2O = S-adenosyl-L-methionine + phosphate + diphosphate. The protein operates within amino-acid biosynthesis; S-adenosyl-L-methionine biosynthesis; S-adenosyl-L-methionine from L-methionine: step 1/1. Functionally, catalyzes the formation of S-adenosylmethionine (AdoMet) from methionine and ATP. The overall synthetic reaction is composed of two sequential steps, AdoMet formation and the subsequent tripolyphosphate hydrolysis which occurs prior to release of AdoMet from the enzyme. In Clostridium botulinum (strain Alaska E43 / Type E3), this protein is S-adenosylmethionine synthase.